A 378-amino-acid chain; its full sequence is Biotin synthase, mitochondrial (378 aa).

Residues 1-26 (MMLVRSVFRSQLRPSVSGGLQSASCY) constitute a mitochondrion transit peptide. Positions 79–308 (REVQQCTLLS…KAMVRLSAGR (230 aa)) constitute a Radical SAM core domain. Positions 94, 98, and 101 each coordinate [4Fe-4S] cluster. Residues C138, C171, C231, and R303 each coordinate [2Fe-2S] cluster. Residues 357-378 (PPSFSEDDSESENCEKVASASH) are disordered.

It belongs to the radical SAM superfamily. Biotin synthase family. The cofactor is [4Fe-4S] cluster. It depends on [2Fe-2S] cluster as a cofactor.

The protein resides in the mitochondrion. It carries out the reaction (4R,5S)-dethiobiotin + (sulfur carrier)-SH + 2 reduced [2Fe-2S]-[ferredoxin] + 2 S-adenosyl-L-methionine = (sulfur carrier)-H + biotin + 2 5'-deoxyadenosine + 2 L-methionine + 2 oxidized [2Fe-2S]-[ferredoxin]. It participates in cofactor biosynthesis; biotin biosynthesis; biotin from 7,8-diaminononanoate: step 2/2. In Arabidopsis thaliana (Mouse-ear cress), this protein is Biotin synthase, mitochondrial (BIO2).